The sequence spans 675 residues: Zinc finger CCCH domain-containing protein 65 (675 aa).

Residues 294–320 form a disordered region; the sequence is TFSNEAKMDPGTSIKKRSAPSKDAKAR. A compositionally biased stretch (basic residues) spans 307 to 320; that stretch reads IKKRSAPSKDAKAR. A coiled-coil region spans residues 314-342; the sequence is SKDAKARKRAKARIKRAQERIALGVKKLK. 3 C3H1-type zinc fingers span residues 350 to 377, 384 to 406, and 409 to 432; these read PKPI…HDTI, PCCY…HDLS, and PCNN…HKGT. 2 disordered regions span residues 487 to 572 and 586 to 612; these read LKPS…LPLG and EQKT…SHIQ. Low complexity predominate over residues 490–504; that stretch reads SSHSNQRNSSDASSS. The span at 543 to 567 shows a compositional bias: polar residues; the sequence is KASSASKPNTDNSDSQTLKQSQQGS. Positions 586-595 are enriched in basic and acidic residues; the sequence is EQKTLNREPQ. Polar residues predominate over residues 597–612; the sequence is PASSKNLKTTPSSHIQ.

In terms of biological role, possesses RNA-binding and ribonuclease activities in vitro. The chain is Zinc finger CCCH domain-containing protein 65 (EMB1789) from Arabidopsis thaliana (Mouse-ear cress).